Here is a 574-residue protein sequence, read N- to C-terminus: Fusion glycoprotein F0 (574 aa).

A signal peptide spans 1–25 (MELPILKANAITTILAAVTFCFASS). Topologically, residues 26–524 (QNITEEFYQS…HVNAGKSTTN (499 aa)) are extracellular. N-linked (GlcNAc...) asparagine; by host glycosylation is found at N27 and N70. 7 cysteine pairs are disulfide-bonded: C37–C439, C69–C212, C313–C343, C322–C333, C358–C367, C382–C393, and C416–C422. Residues 76–96 (VKLINQELDKYKNAVTELQLL) adopt a coiled-coil conformation. Residues N116, N120, and N126 are each glycosylated (N-linked (GlcNAc...) asparagine; by host). The tract at residues 137 to 157 (FLGFLLGVGSAIASGIAVSKV) is fusion peptide. A coiled-coil region spans residues 158–209 (LHLEGEVNKIKSALLSTNKAVVSLSNGVSVLTSKVLDLKNYIDKQLLPIVNK). A coiled-coil region spans residues 481–516 (LVFPSDEFDASISQVNEKINQSLAFIRKSDELLHHV). Residue N500 is glycosylated (N-linked (GlcNAc...) asparagine; by host). A helical transmembrane segment spans residues 525–550 (IMITTIIIVIIVILLSLIAVGLLLYC). The S-palmitoyl cysteine; by host moiety is linked to residue C550. Residues 551-574 (KARSTPVTLSKDQLSGINNIAFSN) are Cytoplasmic-facing.

The protein belongs to the paramyxoviruses fusion glycoprotein family. As to quaternary structure, homotrimer. Heterodimer with fusion protein F2; disulfide-linked. Interacts with host NCL; this interaction plays a role in viral entry into the host cell. As a heterodimer with F2, interacts with host heparan sulfate. As a heterodimer with F2, interacts with host IGF1R; this interaction activates PRKCZ/PKCzeta that recruits NCL/nucleolin from the host nucleus to the plasma membrane. Part of a complex composed of F1, F2 and G glycoproteins. As a heterodimer with F2, interacts with host RHOA; this interaction facilitates virus-induced syncytium formation. In terms of assembly, homotrimer. Heterodimer with fusion protein F1; disulfide-linked. As a heterodimer with F1, interacts with host heparan sulfate. As a heterodimer with F1, interacts with host IGF1R; this interaction activates PRKCZ/PKCzeta that recruits NCL/nucleolin from the host nucleus to the plasma membrane. Part of a complex composed of F1, F2 and G glycoproteins. As a heterodimer with F1, interacts with host RHOA; this interaction facilitates virus-induced syncytium formation. In terms of processing, the F glycoprotein is synthesized as a F0 inactive precursor that is heavily N-glycosylated and processed at two sites by a host furin-like protease probably in the Golgi. The cleavage site between p27 and F1 may occur after endocytosis to yield the mature F1 and F2 proteins. Both cleavages are required for membrane fusion and p27 is released from the processed protein.

Its subcellular location is the host Golgi apparatus membrane. The protein resides in the virion membrane. The protein localises to the host cell membrane. Its function is as follows. Inactive precursor that is cleaved at two sites by a furin-like protease to give rise to the mature F1 and F2 fusion glycoproteins. Functionally, class I viral fusion protein. Under the current model, the protein has at least 3 conformational states: pre-fusion native state, pre-hairpin intermediate state, and post-fusion hairpin state. During viral and plasma cell membrane fusion, the coiled coil regions assume a trimer-of-hairpins structure, positioning the fusion peptide in close proximity to the C-terminal region of the ectodomain. The formation of this structure appears to drive apposition and subsequent fusion of viral and cellular membranes leading to delivery of the nucleocapsid into the cytoplasm. This fusion is pH independent and occurs at the plasma or endosomal membrane. The trimer of F1-F2 (F protein) also facilitates the attachment to host cell by binding to host heparan sulfate. F protein is involved in the entry into the host cell through the interaction with host IGF1R. This interaction activates PRKCZ/PKCzeta that recruits host NCL/nucleolin to the apical cell surface where it can bind fusion glycoprotein F1. Later in infection, F protein expressed at the plasma membrane of infected cells can mediate fusion with adjacent cells to form syncytia, a cytopathic effect that could lead to tissue necrosis. F protein may trigger p53-dependent apoptosis. In terms of biological role, major determinant of the species specificity of RSV infection. The trimer of F1-F2 (F protein) also facilitates the attachment to host cell by binding to host heparan sulfate. F protein is involved in the entry into the host cell through the interaction with host IGF1R. This interaction activates PRKCZ/PKCzeta that recruits host NCL/nucleolin to the apical cell surface where it can bind fusion glycoprotein F1. Later in infection, F protein expressed at the plasma membrane of infected cells can mediate fusion with adjacent cells to form syncytia, a cytopathic effect that could lead to tissue necrosis. F protein seems to trigger p53-dependent apoptosis. In Homo sapiens (Human), this protein is Fusion glycoprotein F0 (F).